We begin with the raw amino-acid sequence, 97 residues long: Co-chaperonin GroES (97 aa).

This sequence belongs to the GroES chaperonin family. As to quaternary structure, heptamer of 7 subunits arranged in a ring. Interacts with the chaperonin GroEL.

It localises to the cytoplasm. Its function is as follows. Together with the chaperonin GroEL, plays an essential role in assisting protein folding. The GroEL-GroES system forms a nano-cage that allows encapsulation of the non-native substrate proteins and provides a physical environment optimized to promote and accelerate protein folding. GroES binds to the apical surface of the GroEL ring, thereby capping the opening of the GroEL channel. In Pectobacterium atrosepticum (strain SCRI 1043 / ATCC BAA-672) (Erwinia carotovora subsp. atroseptica), this protein is Co-chaperonin GroES.